Consider the following 104-residue polypeptide: ATP-dependent Clp protease adapter protein ClpS (104 aa).

The protein belongs to the ClpS family. As to quaternary structure, binds to the N-terminal domain of the chaperone ClpA.

Involved in the modulation of the specificity of the ClpAP-mediated ATP-dependent protein degradation. The sequence is that of ATP-dependent Clp protease adapter protein ClpS from Neisseria gonorrhoeae (strain ATCC 700825 / FA 1090).